Consider the following 94-residue polypeptide: Small ribosomal subunit protein uS19 (94 aa).

Belongs to the universal ribosomal protein uS19 family.

Its function is as follows. Protein S19 forms a complex with S13 that binds strongly to the 16S ribosomal RNA. The chain is Small ribosomal subunit protein uS19 from Nitrosomonas eutropha (strain DSM 101675 / C91 / Nm57).